A 501-amino-acid chain; its full sequence is Fumarate reductase 2 (501 aa).

The transit peptide at 1-32 (MIRSVRRVFIYVSIFVLIIVLKRTLSGTDQTS) directs the protein to the mitochondrion. Residue 37 to 51 (VVVIGSGLAGLTTSN) coordinates FAD. Residues H281 and R304 contribute to the active site.

It belongs to the FAD-dependent oxidoreductase 2 family. FRD/SDH subfamily. FAD serves as cofactor.

It localises to the mitochondrion. The enzyme catalyses succinate + NAD(+) = fumarate + NADH + H(+). Its function is as follows. Irreversibly catalyzes the reduction of fumarate to succinate. Together with the second isozyme of soluble fumarate reductase (FRD1), essential for anaerobic growth. Involved in maintaining redox balance during oxygen deficiency conditions. Reduction of fumarate is the main source of succinate during fermentation, and under anaerobic conditions, the formation of succinate is strictly required for the reoxidation of FADH(2). In Saccharomyces cerevisiae (strain ATCC 204508 / S288c) (Baker's yeast), this protein is Fumarate reductase 2 (OSM1).